Reading from the N-terminus, the 469-residue chain is uncharacterized protein (469 aa).

Residues 152 to 161 (VREGKEEKKG) are compositionally biased toward basic and acidic residues. The segment at 152-174 (VREGKEEKKGGPPGRGPPGWRRR) is disordered. Coiled-coil stretches lie at residues 346 to 375 (KAAL…RSES) and 423 to 453 (SDIT…KIKG).

This is an uncharacterized protein from Homo sapiens (Human).